A 769-amino-acid polypeptide reads, in one-letter code: Apoptotic enhancer 1 protein (769 aa).

Disordered stretches follow at residues 69 to 88 (PVRV…SQQY), 265 to 396 (SVEP…LDES), and 451 to 518 (PQLP…RSDD). A compositionally biased stretch (low complexity) spans 275–284 (QQQQPSPQMM). Basic and acidic residues predominate over residues 285–295 (KSEEFSEKRDL). Low complexity predominate over residues 339 to 353 (STDPHSNHSSPSTSS). Composition is skewed to polar residues over residues 354–378 (QKAP…TMTR), 453–467 (LPTS…TSET), and 474–491 (NSES…NNLE). ANK repeat units follow at residues 585–617 (EGIT…AQDS) and 618–652 (DGWT…TLSD). Residues 684–746 (INTGKVYAAY…PRTYLALYPS (63 aa)) form the SH3 domain.

Belongs to the iASPP family. As to quaternary structure, interacts with cep-1/p53; the interaction inhibits pro-apoptotic activity of cep-1.

It localises to the nucleus. Functionally, negetively regulates apoptosis via its interaction with cep-1. The sequence is that of Apoptotic enhancer 1 protein from Caenorhabditis elegans.